The chain runs to 742 residues: Polyribonucleotide nucleotidyltransferase (742 aa).

Residues Asp515 and Asp521 each contribute to the Mg(2+) site. One can recognise a KH domain in the interval 581-640 (PRIITITIPVDKIGEVIGPKGKIINQIQDDTGASISIEDDGTIYIGATNGEAAEAAKNAV). In terms of domain architecture, S1 motif spans 652 to 724 (GERYLGTVVK…DRGKLSLVPV (73 aa)).

The protein belongs to the polyribonucleotide nucleotidyltransferase family. The cofactor is Mg(2+).

It localises to the cytoplasm. It carries out the reaction RNA(n+1) + phosphate = RNA(n) + a ribonucleoside 5'-diphosphate. In terms of biological role, involved in mRNA degradation. Catalyzes the phosphorolysis of single-stranded polyribonucleotides processively in the 3'- to 5'-direction. This Nocardioides sp. (strain ATCC BAA-499 / JS614) protein is Polyribonucleotide nucleotidyltransferase.